The sequence spans 620 residues: Coenzyme F420-dependent sulfite reductase (620 aa).

The region spanning 6–35 (LNEIVDSGVCARCGTCTIVCPNGILTFDER) is the 4Fe-4S ferredoxin-type 1 domain. Residues Cys15, Cys18, Cys21, Cys25, Cys428, Cys434, Cys468, Cys472, Cys495, Cys498, Cys501, Cys505, Cys524, Cys527, Cys530, and Cys534 each coordinate [4Fe-4S] cluster. Cys472 serves as a coordination point for siroheme. 4Fe-4S ferredoxin-type domains lie at 486–515 (KYPK…IRGE) and 520–544 (NYNV…VKEE).

Belongs to the nitrite and sulfite reductase 4Fe-4S domain family. It depends on [4Fe-4S] cluster as a cofactor. The cofactor is siroheme.

The catalysed reaction is 3 oxidized coenzyme F420-(gamma-L-Glu)(n) + hydrogen sulfide + 3 H2O + 2 H(+) = 3 reduced coenzyme F420-(gamma-L-Glu)(n) + sulfite. Catalyzes the reduction of sulfite to sulfide using reduced F420 as the electron source. Involved in sulfite detoxification and assimilation. Cannot use NADH or NADPH. In Methanocaldococcus jannaschii (strain ATCC 43067 / DSM 2661 / JAL-1 / JCM 10045 / NBRC 100440) (Methanococcus jannaschii), this protein is Coenzyme F420-dependent sulfite reductase.